A 309-amino-acid chain; its full sequence is Pyridoxal kinase (309 aa).

The residue at position 2 (Thr-2) is an N-acetylthreonine; in Pyridoxal kinase, N-terminally processed. Residues Ser-23 and Thr-58 each coordinate pyridoxal. Position 58 (Thr-58) interacts with pyridoxal 5'-phosphate. Asp-124 lines the ATP pocket. Na(+) is bound at residue Asp-124. A Mg(2+)-binding site is contributed by Asp-129. Residue Thr-155 participates in Na(+) binding. ATP is bound by residues 157-160 (NQFE), 193-194 (TS), 225-227 (IPA), and Thr-232. Thr-193 lines the Na(+) pocket. 233-234 (GD) contacts pyridoxal 5'-phosphate. The Proton acceptor role is filled by Asp-234.

This sequence belongs to the pyridoxine kinase family. As to quaternary structure, homodimer. Zn(2+) is required as a cofactor. Expressed ubiquitously in leaves, stems, roots, flowers and siliques. Present in root hairs and other tip-growing cells such as papillar cells on the top of stigma.

It carries out the reaction pyridoxal + ATP = pyridoxal 5'-phosphate + ADP + H(+). It functions in the pathway cofactor metabolism; pyridoxal 5'-phosphate salvage; pyridoxal 5'-phosphate from pyridoxal: step 1/1. Catalyzes the transfer of a phosphate group from ATP to the 5-hydroxylmethyl group of pyridoxal to form the biologically active pyridoxal phosphate, an active form of vitamin B6. Required for Na(+) and K(+) homeostasis and for salt tolerance. Involved in root hair development, both for initiation and tip growth. This is Pyridoxal kinase from Arabidopsis thaliana (Mouse-ear cress).